A 363-amino-acid polypeptide reads, in one-letter code: 3-dehydroquinate synthase (363 aa).

NAD(+) is bound by residues 70 to 75 (SGETSK), 104 to 108 (GVIGD), 128 to 129 (TT), Lys-141, Lys-150, and 168 to 171 (TLDT). Zn(2+) is bound by residues Glu-183, His-245, and His-262.

Belongs to the sugar phosphate cyclases superfamily. Dehydroquinate synthase family. The cofactor is Co(2+). Requires Zn(2+) as cofactor. NAD(+) serves as cofactor.

The protein resides in the cytoplasm. It catalyses the reaction 7-phospho-2-dehydro-3-deoxy-D-arabino-heptonate = 3-dehydroquinate + phosphate. It functions in the pathway metabolic intermediate biosynthesis; chorismate biosynthesis; chorismate from D-erythrose 4-phosphate and phosphoenolpyruvate: step 2/7. Its function is as follows. Catalyzes the conversion of 3-deoxy-D-arabino-heptulosonate 7-phosphate (DAHP) to dehydroquinate (DHQ). This chain is 3-dehydroquinate synthase, found in Alkaliphilus oremlandii (strain OhILAs) (Clostridium oremlandii (strain OhILAs)).